The primary structure comprises 315 residues: Aspartate carbamoyltransferase catalytic subunit (315 aa).

Arg65 and Thr66 together coordinate carbamoyl phosphate. Lys93 is a binding site for L-aspartate. 3 residues coordinate carbamoyl phosphate: Arg115, His145, and Gln148. L-aspartate contacts are provided by Arg179 and Arg234. Residues Gly275 and Pro276 each contribute to the carbamoyl phosphate site.

The protein belongs to the aspartate/ornithine carbamoyltransferase superfamily. ATCase family. Heterododecamer (2C3:3R2) of six catalytic PyrB chains organized as two trimers (C3), and six regulatory PyrI chains organized as three dimers (R2).

The enzyme catalyses carbamoyl phosphate + L-aspartate = N-carbamoyl-L-aspartate + phosphate + H(+). Its pathway is pyrimidine metabolism; UMP biosynthesis via de novo pathway; (S)-dihydroorotate from bicarbonate: step 2/3. Catalyzes the condensation of carbamoyl phosphate and aspartate to form carbamoyl aspartate and inorganic phosphate, the committed step in the de novo pyrimidine nucleotide biosynthesis pathway. The polypeptide is Aspartate carbamoyltransferase catalytic subunit (Xanthomonas campestris pv. campestris (strain 8004)).